We begin with the raw amino-acid sequence, 658 residues long: Transcription factor cep-1 (658 aa).

The DNA-binding element occupies E238–R428. Residues C319, H322, C375, and C379 each contribute to the Zn(2+) site. A disordered region spans residues Q450–S477. Over residues T466 to S476 the composition is skewed to low complexity. The segment at Q535 to I564 is required for tertiary structure stability of the protein.

It belongs to the p53 family. As to quaternary structure, homodimer. Interacts (via C-terminus domain) with prmt-5; not methylated by prmt-5. Interacts with cbp-1 (via HAT domain); cep-1 transcriptional activity may be inhibited by interaction with methylated cbp-1. Component of a complex that contains prmt-5 and cbp-1. Interacts with ape-1; the interaction inhibits pro-apoptotic activity of cep-1. It depends on Zn(2+) as a cofactor. In terms of processing, phosphorylated in response to IR-induced DNA damage which is thought to be mediated by akt-1.

Its subcellular location is the nucleus. Its function is as follows. Transcriptional activator that binds the same DNA consensus sequence as p53. Has a role in normal development to ensure proper meiotic chromosome segregation. Promotes apoptosis under conditions of cellular and genotoxic stress in response to DNA damage, hypoxia, or starvation. However, not required for DNA repair in response to UV-C or to regulate cell-cycle progression. Regulates germline apoptosis in response to DNA damage. Required for induction of ced-13 in response to DNA damage. Its pro-apoptotic activity is inhibited when bound to ape-1 in vitro. Regulates germline proliferation by activating phg-1. Regulates DNA damage-induced apoptosis by inducing transcription of the programmed cell death activator egl-1. Negatively regulates lifespan. The sequence is that of Transcription factor cep-1 from Caenorhabditis briggsae.